A 256-amino-acid polypeptide reads, in one-letter code: Acetyl-coenzyme A carboxylase carboxyl transferase subunit alpha (256 aa).

The CoA carboxyltransferase C-terminal domain maps to 1 to 236 (MTKITRIIKE…KEEIAAELDS (236 aa)).

The protein belongs to the AccA family. In terms of assembly, acetyl-CoA carboxylase is a heterohexamer composed of biotin carboxyl carrier protein (AccB), biotin carboxylase (AccC) and two subunits each of ACCase subunit alpha (AccA) and ACCase subunit beta (AccD).

The protein resides in the cytoplasm. The enzyme catalyses N(6)-carboxybiotinyl-L-lysyl-[protein] + acetyl-CoA = N(6)-biotinyl-L-lysyl-[protein] + malonyl-CoA. The protein operates within lipid metabolism; malonyl-CoA biosynthesis; malonyl-CoA from acetyl-CoA: step 1/1. Functionally, component of the acetyl coenzyme A carboxylase (ACC) complex. First, biotin carboxylase catalyzes the carboxylation of biotin on its carrier protein (BCCP) and then the CO(2) group is transferred by the carboxyltransferase to acetyl-CoA to form malonyl-CoA. This chain is Acetyl-coenzyme A carboxylase carboxyl transferase subunit alpha, found in Streptococcus sanguinis (strain SK36).